Reading from the N-terminus, the 469-residue chain is Argininosuccinate lyase (469 aa).

The protein belongs to the lyase 1 family. Argininosuccinate lyase subfamily.

The protein localises to the cytoplasm. The catalysed reaction is 2-(N(omega)-L-arginino)succinate = fumarate + L-arginine. It participates in amino-acid biosynthesis; L-arginine biosynthesis; L-arginine from L-ornithine and carbamoyl phosphate: step 3/3. The sequence is that of Argininosuccinate lyase from Burkholderia thailandensis (strain ATCC 700388 / DSM 13276 / CCUG 48851 / CIP 106301 / E264).